The primary structure comprises 614 residues: V-type proton ATPase catalytic subunit A isoform 1 (614 aa).

247–254 provides a ligand contact to ATP; that stretch reads GAFGCGKT.

Belongs to the ATPase alpha/beta chains family. V-ATPase is a heteromultimeric enzyme made up of two complexes: the ATP-hydrolytic V1 complex and the proton translocation V0 complex. The V1 complex consists of three catalytic AB heterodimers that form a heterohexamer, three peripheral stalks each consisting of EG heterodimers, one central rotor including subunits D and F, and the regulatory subunits C and H. The proton translocation complex V0 consists of the proton transport subunit a, a ring of proteolipid subunits c9c'', rotary subunit d, subunits e and f, and the accessory subunits VhaAC45 and ATP6AP2.

The enzyme catalyses ATP + H2O + 4 H(+)(in) = ADP + phosphate + 5 H(+)(out). ATP hydrolysis occurs at the interface between the nucleotide-binding domains of subunits A and B. ATP hydrolysis triggers a conformational change in the subunits D and F, which induces a shift of subunit d. The c-ring is subsequently rotated and results in a continuous proton translocation across the membrane. In terms of biological role, catalytic subunit of the V1 complex of vacuolar(H+)-ATPase (V-ATPase), a multisubunit enzyme composed of a peripheral complex (V1) that hydrolyzes ATP and a membrane integral complex (V0) that translocates protons. V-ATPase is responsible for acidifying and maintaining the pH of intracellular compartments and in some cell types, is targeted to the plasma membrane, where it is responsible for acidifying the extracellular environment. This chain is V-type proton ATPase catalytic subunit A isoform 1 (Vha68-1), found in Drosophila melanogaster (Fruit fly).